A 108-amino-acid polypeptide reads, in one-letter code: Pyrimidine/purine nucleoside phosphorylase (108 aa).

It belongs to the nucleoside phosphorylase PpnP family.

It carries out the reaction a purine D-ribonucleoside + phosphate = a purine nucleobase + alpha-D-ribose 1-phosphate. The enzyme catalyses adenosine + phosphate = alpha-D-ribose 1-phosphate + adenine. The catalysed reaction is cytidine + phosphate = cytosine + alpha-D-ribose 1-phosphate. It catalyses the reaction guanosine + phosphate = alpha-D-ribose 1-phosphate + guanine. It carries out the reaction inosine + phosphate = alpha-D-ribose 1-phosphate + hypoxanthine. The enzyme catalyses thymidine + phosphate = 2-deoxy-alpha-D-ribose 1-phosphate + thymine. The catalysed reaction is uridine + phosphate = alpha-D-ribose 1-phosphate + uracil. It catalyses the reaction xanthosine + phosphate = alpha-D-ribose 1-phosphate + xanthine. In terms of biological role, catalyzes the phosphorolysis of diverse nucleosides, yielding D-ribose 1-phosphate and the respective free bases. Can use uridine, adenosine, guanosine, cytidine, thymidine, inosine and xanthosine as substrates. Also catalyzes the reverse reactions. The sequence is that of Pyrimidine/purine nucleoside phosphorylase from Polaromonas naphthalenivorans (strain CJ2).